The chain runs to 857 residues: Facilitated trehalose transporter Tret1-1 (857 aa).

2 disordered regions span residues 1-27 (MSGRDNRGAGGGGGGHQPLSNAMGKLK) and 92-203 (SFRP…KATS). Over 1–392 (MSGRDNRGAG…VYRPTTNPIY (392 aa)) the chain is Cytoplasmic. The span at 134–143 (EIREHRDRQQ) shows a compositional bias: basic and acidic residues. Positions 171 to 181 (GNSNTNSNKAA) are enriched in polar residues. A phosphoserine mark is found at serine 248, serine 249, serine 250, serine 320, and serine 322. Residues 327–346 (LTSRQHFQQQRSISTDSRKS) are disordered. A compositionally biased stretch (polar residues) spans 330-341 (RQHFQQQRSIST). The chain crosses the membrane as a helical span at residues 393–413 (IWTQVLAALSVSLGSLVVGFV). At 414-440 (SAYTSPALVSMTDRNITSFEVTQDAGS) the chain is on the extracellular side. N-linked (GlcNAc...) asparagine glycosylation occurs at asparagine 428. Residues 441 to 461 (WVGGIMPLAALAGGITGGPLI) form a helical membrane-spanning segment. The Cytoplasmic segment spans residues 462–473 (EYLGRRNTILAT). The chain crosses the membrane as a helical span at residues 474 to 494 (AVPFIVSSLLIACAVNVAMVL). The Extracellular segment spans residues 495-497 (CGR). A helical transmembrane segment spans residues 498–518 (FLAGFCVGIASLSLPVYLGET). Residues 519–528 (VQPEVRGTLG) lie on the Cytoplasmic side of the membrane. The chain crosses the membrane as a helical span at residues 529 to 549 (LLPTAFGNIGILLCFVAGSFM). An N-linked (GlcNAc...) asparagine glycan is attached at asparagine 550. Residues 550–552 (NWS) are Extracellular-facing. The chain crosses the membrane as a helical span at residues 553 to 573 (MLAFLGAALPVPFLILMFLIP). Residues 574–636 (ETPRWFVGRG…ELLKLNNLKP (63 aa)) are Cytoplasmic-facing. The helical transmembrane segment at 637-657 (LSISLGLMFFQQFSGINAVIF) threads the bilayer. Topologically, residues 658–673 (YTVQIFKDAGSTIDGN) are extracellular. A helical transmembrane segment spans residues 674–694 (LCTIIVGIVNFLATFIGIVLI). Over 695-700 (DRAGRK) the chain is Cytoplasmic. Residues 701 to 721 (ILLYVSDIAMVLTLFVLGGFF) form a helical membrane-spanning segment. The Extracellular portion of the chain corresponds to 722 to 740 (YCKANGPDVSHLGWLPLTC). Residues 741 to 761 (FVIYILGFSLGFGPIPWLMMG) traverse the membrane as a helical segment. Residues 762–767 (EILPAK) are Cytoplasmic-facing. A helical transmembrane segment spans residues 768–788 (IRGSAASVATAFNWFCTFVVT). Residues 789–801 (KTFQDLTVAMGAH) lie on the Extracellular side of the membrane. A helical transmembrane segment spans residues 802–822 (GAFWLFGAICFVGLFFVIIYV). At 823–857 (PETQGKTLEDIERKMMGRVRRMSSVANIKPLSFNM) the chain is on the cytoplasmic side. A phosphoserine mark is found at serine 845 and serine 846.

It belongs to the major facilitator superfamily. Sugar transporter (TC 2.A.1.1) family. Trehalose transporter subfamily.

The protein localises to the cell membrane. In terms of biological role, low-capacity facilitative transporter for trehalose. Does not transport maltose, sucrose or lactose. Mediates the bidirectional transfer of trehalose. Responsible for the transport of trehalose synthesized in the fat body and the incorporation of trehalose into other tissues that require a carbon source, thereby regulating trehalose levels in the hemolymph. The protein is Facilitated trehalose transporter Tret1-1 of Drosophila sechellia (Fruit fly).